We begin with the raw amino-acid sequence, 549 residues long: Movement protein Hsp70h (549 aa).

It belongs to the heat shock protein 70 family.

The protein resides in the virion. Functionally, transports viral genome to neighboring plant cells directly through plasmosdesmata, without any budding. The movement protein allows efficient cell to cell propagation, by bypassing the host cell wall barrier. Two movement proteins, p6, Hsp70h and three structural proteins, CP, CPm, and P64 are essential for cell-cell movement. Also plays a role in virion formation. Together with CPm and p64, encapsidates the 5'-terminal portion of the viral genome. In Vitis vinifera (Grape), this protein is Movement protein Hsp70h.